Reading from the N-terminus, the 1170-residue chain is Disease resistance protein LAZ5 (1170 aa).

Positions 10 to 172 constitute a TIR domain; sequence ESWQVFINFR…KIIDSIKKVL (163 aa). Residue glutamate 84 is part of the active site. Residues 193-219 form a disordered region; it reads EAKNVDTFSPNSSDFPSTSIDDDLSIN. The span at 198-219 shows a compositional bias: polar residues; the sequence is DTFSPNSSDFPSTSIDDDLSIN. The 253-residue stretch at 261 to 513 folds into the NB-ARC domain; sequence RLKEMEEKLD…DVACFFKSEN (253 aa). LRR repeat units lie at residues 595 to 616, 622 to 645, 646 to 670, 677 to 700, 723 to 747, 761 to 785, 790 to 813, 815 to 837, 838 to 861, 862 to 885, 888 to 904, and 905 to 930; these read MENV…TFDG, MCNL…IFKF, DTVR…PWEK, PENL…VKDT, AKNL…MENM, LTCL…KLEE, SENL…AGDL, RLVV…LGKQ, KALQ…VKDM, KHLR…SLKC, LSRN…LKDF, and SNLK…CLEY.

It carries out the reaction NAD(+) + H2O = ADP-D-ribose + nicotinamide + H(+). In terms of biological role, TIR-NB-LRR receptor-like protein that may play a role in plant innate immunity. May trigger hypersensitive programmed cell death in response to pathogen attack. Involved in tolerance to tobacco ringspot virus (TRSV). In Arabidopsis thaliana (Mouse-ear cress), this protein is Disease resistance protein LAZ5.